Here is a 209-residue protein sequence, read N- to C-terminus: Nascent polypeptide-associated complex subunit alpha-like protein 5 (209 aa).

The segment at 23–71 (EKEDDVVVEDVKDGEEEDDDEDDEDVEVEGEGGNENAKQSRSEKKSRKA) is disordered. The span at 25-54 (EDDVVVEDVKDGEEEDDDEDDEDVEVEGEG) shows a compositional bias: acidic residues. Residues 62 to 127 (SRSEKKSRKA…AKVDDLSSQL (66 aa)) enclose the NAC-A/B domain. In terms of domain architecture, UBA spans 170-207 (VEARDIDLVMTQAGVSKAKAVSALKANDGDIVSAIMEL).

Belongs to the NAC-alpha family.

Functionally, may promote appropriate targeting of ribosome-nascent polypeptide complexes. This is Nascent polypeptide-associated complex subunit alpha-like protein 5 from Arabidopsis thaliana (Mouse-ear cress).